The following is a 741-amino-acid chain: 2-5A-dependent ribonuclease (741 aa).

Positions 1–21 are disordered; it reads MESRDHNNPQEGPTSSSGRRA. A compositionally biased stretch (polar residues) spans 9 to 18; it reads PQEGPTSSSG. ANK repeat units follow at residues 24 to 53, 58 to 87, 91 to 120, 124 to 153, 167 to 197, 201 to 234, 238 to 268, 272 to 301, and 303 to 329; these read EDNH…NVNF, GGWT…DPVL, NGAT…DVNE, YGFT…NVNL, GGAT…DVNA, MGRN…DVNV, RGKT…EIND, DGKT…STDC, and DLVM…KEDF. 2 2-5A binding (P-loop) regions span residues 229-242 and 253-275; these read GADV…GKTP and GLVQ…DGKT. Positions 365–586 constitute a Protein kinase domain; sequence IDEKYKIADT…LSDLLGHPFF (222 aa). The C6-type; atypical zinc finger occupies 395–444; sequence CEGSPRAQREVSCLQSSRENSHLVTFYGSESHRGHLFVCVTLCEQTLEAC. The KEN domain maps to 589 to 723; sequence WESRYRTLRN…KHFPQTHSPN (135 aa). K684 bears the N6-acetyllysine mark. Residues 715 to 741 form a disordered region; that stretch reads HFPQTHSPNKPQCDGAGGASGLASPGC.

This sequence belongs to the protein kinase superfamily. In terms of assembly, monomer (inactive form) or homodimer. Interacts with ABCE1; this interaction inhibits the RNASEL. Mn(2+) serves as cofactor. The cofactor is Mg(2+). Highly expressed in spleen and thymus followed by prostate, testis, uterus, small intestine, colon and peripheral blood leukocytes.

It localises to the cytoplasm. Its subcellular location is the mitochondrion. After binding to 2-5A (5'-phosphorylated 2',5'-linked oligoadenylates) the homodimerization and subsequent activation occurs. Inhibited by RNASEL inhibitor ABCE1/RLI, a cytoplasmic member of the ATP-binding cassette (ABC) transporter family. In terms of biological role, endoribonuclease that functions in the interferon (IFN) antiviral response. In INF treated and virus infected cells, RNASEL probably mediates its antiviral effects through a combination of direct cleavage of single-stranded viral RNAs, inhibition of protein synthesis through the degradation of rRNA, induction of apoptosis, and induction of other antiviral genes. RNASEL mediated apoptosis is the result of a JNK-dependent stress-response pathway leading to cytochrome c release from mitochondria and caspase-dependent apoptosis. Therefore, activation of RNASEL could lead to elimination of virus infected cells under some circumstances. In the crosstalk between autophagy and apoptosis proposed to induce autophagy as an early stress response to small double-stranded RNA and at later stages of prolonged stress to activate caspase-dependent proteolytic cleavage of BECN1 to terminate autophagy and promote apoptosis. Might play a central role in the regulation of mRNA turnover. Cleaves 3' of UpNp dimers, with preference for UU and UA sequences, to sets of discrete products ranging from between 4 and 22 nucleotides in length. The protein is 2-5A-dependent ribonuclease (RNASEL) of Homo sapiens (Human).